The following is a 446-amino-acid chain: MAKVYNQEVYVQFLKQHGFVFQSSEIYNGLNNSWDFGPLGAVLKQQIKQALYNFFIKNKADVLLVETPIILSELVWKASGHLANFVDTLVDCKSCKYRFRVDQINAEIKAKKDWNSFKVNCPNCHNQNWSEVRDFNLLFQTEIGVVNNDKRLVFLRPETAQGSFINFKNILQAKKRNLPFAIAQFGKSFRNEITPGNFLFRTREFEQFEIEWFCKPDDANSLFEKQLIMVEQFLQTVLKINPELLKKHEYDQSELAHYAKKTTDFLFNFPHGLKELWGLANRGDFDLKQHQEFSKKSMSFFDSELNQHFLPFIIEPAVGIERLFYALIVSSYRREIINEEEREVLSLPFDLCPEQIIVLPLVNKLKKEAFSVFETLAKTRWRVCFETTGSIGKRYRKADAIGIKYAVTFDFESLEDNAVTIRDRDTLVQQRIAIKELPQWFMKNGQ.

Positions 100 and 158 each coordinate substrate. Residues 190 to 192, 200 to 205, 275 to 276, and 319 to 322 contribute to the ATP site; these read RNE, FRTREF, EL, and GIER. 205–209 lines the substrate pocket; that stretch reads FEQFE. 315–319 is a substrate binding site; that stretch reads EPAVG.

Belongs to the class-II aminoacyl-tRNA synthetase family. As to quaternary structure, homodimer.

Its subcellular location is the cytoplasm. It catalyses the reaction tRNA(Gly) + glycine + ATP = glycyl-tRNA(Gly) + AMP + diphosphate. Catalyzes the attachment of glycine to tRNA(Gly). This is Glycine--tRNA ligase from Mycoplasma genitalium (strain ATCC 33530 / DSM 19775 / NCTC 10195 / G37) (Mycoplasmoides genitalium).